Here is a 223-residue protein sequence, read N- to C-terminus: Deoxyribose-phosphate aldolase (223 aa).

Asp-91 acts as the Proton donor/acceptor in catalysis. Lys-153 serves as the catalytic Schiff-base intermediate with acetaldehyde. The active-site Proton donor/acceptor is Lys-182.

The protein belongs to the DeoC/FbaB aldolase family. DeoC type 1 subfamily.

The protein resides in the cytoplasm. It carries out the reaction 2-deoxy-D-ribose 5-phosphate = D-glyceraldehyde 3-phosphate + acetaldehyde. It participates in carbohydrate degradation; 2-deoxy-D-ribose 1-phosphate degradation; D-glyceraldehyde 3-phosphate and acetaldehyde from 2-deoxy-alpha-D-ribose 1-phosphate: step 2/2. Its function is as follows. Catalyzes a reversible aldol reaction between acetaldehyde and D-glyceraldehyde 3-phosphate to generate 2-deoxy-D-ribose 5-phosphate. This is Deoxyribose-phosphate aldolase from Streptococcus agalactiae serotype V (strain ATCC BAA-611 / 2603 V/R).